Reading from the N-terminus, the 507-residue chain is Maturase K (507 aa).

The protein belongs to the intron maturase 2 family. MatK subfamily.

It localises to the plastid. It is found in the chloroplast. Usually encoded in the trnK tRNA gene intron. Probably assists in splicing its own and other chloroplast group II introns. The chain is Maturase K from Lyonia ferruginea (Rusty staggerbush).